The sequence spans 29 residues: Beta-theraphotoxin-Gr1b (29 aa).

3 disulfides stabilise this stretch: Cys-2–Cys-16, Cys-9–Cys-21, and Cys-15–Cys-25. At Leu-29 the chain carries Leucine amide.

Belongs to the neurotoxin 30 (phrixotoxin) family. In terms of tissue distribution, expressed by the venom gland.

It is found in the secreted. Inhibits the voltage-gated sodium channels Nav1.1/SCN1A (IC(50)=360 nM), Nav1.2/SCN2A (IC(50)=600 nM), Nav1.3/SCN3A (IC(50)=1280), Nav1.4/SCN4A (IC(50)=330 nM), Nav1.6/SCN8A (IC(50)=1200 nM), Nav1.7/SCN9A (IC(50)=1-40 nM), and voltage-gated potassium channels Kv11.1/KCNH2 (IC(50)=4.8 uM). Induces analgesia in mammals. This analgesia is mediated by a non-opioid receptor related mechanism. This Grammostola rosea (Chilean rose tarantula) protein is Beta-theraphotoxin-Gr1b.